The chain runs to 326 residues: L-lactate dehydrogenase (326 aa).

Residues V26, D47, K52, Y78, and 92–93 contribute to the NAD(+) site; that span reads GA. Residues Q95 and R101 each coordinate substrate. NAD(+) is bound by residues T114, 131–133, and S156; that span reads ASN. A substrate-binding site is contributed by 133–136; it reads NPVD. 161–164 provides a ligand contact to substrate; sequence DTAR. 2 residues coordinate beta-D-fructose 1,6-bisphosphate: R166 and H181. H188 serves as the catalytic Proton acceptor. The residue at position 233 (Y233) is a Phosphotyrosine. T242 lines the substrate pocket.

It belongs to the LDH/MDH superfamily. LDH family. Homotetramer.

The protein localises to the cytoplasm. The catalysed reaction is (S)-lactate + NAD(+) = pyruvate + NADH + H(+). It functions in the pathway fermentation; pyruvate fermentation to lactate; (S)-lactate from pyruvate: step 1/1. With respect to regulation, allosterically activated by fructose 1,6-bisphosphate (FBP). Functionally, catalyzes the conversion of lactate to pyruvate. In Corynebacterium jeikeium (strain K411), this protein is L-lactate dehydrogenase.